The primary structure comprises 1073 residues: ATP-dependent helicase/deoxyribonuclease subunit B (1073 aa).

This sequence belongs to the helicase family. AddB/RexB type 2 subfamily. As to quaternary structure, heterodimer of AddA and RexB. Mg(2+) is required as a cofactor.

The heterodimer acts as both an ATP-dependent DNA helicase and an ATP-dependent, dual-direction single-stranded exonuclease. Recognizes the chi site generating a DNA molecule suitable for the initiation of homologous recombination. This subunit has 5' -&gt; 3' nuclease activity but not helicase activity. The sequence is that of ATP-dependent helicase/deoxyribonuclease subunit B from Streptococcus equi subsp. zooepidemicus (strain H70).